The primary structure comprises 134 residues: Glycine cleavage system H protein (134 aa).

The Lipoyl-binding domain maps to 24 to 106 (TVRVGITDYA…YGAGWLLDIQ (83 aa)). The residue at position 65 (lysine 65) is an N6-lipoyllysine.

Belongs to the GcvH family. In terms of assembly, the glycine cleavage system is composed of four proteins: P, T, L and H. (R)-lipoate serves as cofactor.

The glycine cleavage system catalyzes the degradation of glycine. The H protein shuttles the methylamine group of glycine from the P protein to the T protein. In Mycobacterium bovis (strain ATCC BAA-935 / AF2122/97), this protein is Glycine cleavage system H protein.